The sequence spans 153 residues: Ribonuclease H (153 aa).

The RNase H type-1 domain maps to 1–142; the sequence is MTDQIEIFTD…ADELARRGVD (142 aa). Mg(2+) contacts are provided by Asp-10, Glu-48, Asp-70, and Asp-134.

It belongs to the RNase H family. As to quaternary structure, monomer. The cofactor is Mg(2+).

Its subcellular location is the cytoplasm. The enzyme catalyses Endonucleolytic cleavage to 5'-phosphomonoester.. Endonuclease that specifically degrades the RNA of RNA-DNA hybrids. This chain is Ribonuclease H, found in Aromatoleum aromaticum (strain DSM 19018 / LMG 30748 / EbN1) (Azoarcus sp. (strain EbN1)).